The primary structure comprises 260 residues: UPF0246 protein Bcen2424_2223 (260 aa).

It belongs to the UPF0246 family.

The polypeptide is UPF0246 protein Bcen2424_2223 (Burkholderia cenocepacia (strain HI2424)).